A 156-amino-acid chain; its full sequence is Small ribosomal subunit protein uS7 (156 aa).

It belongs to the universal ribosomal protein uS7 family. Part of the 30S ribosomal subunit. Contacts proteins S9 and S11.

Its function is as follows. One of the primary rRNA binding proteins, it binds directly to 16S rRNA where it nucleates assembly of the head domain of the 30S subunit. Is located at the subunit interface close to the decoding center, probably blocks exit of the E-site tRNA. The protein is Small ribosomal subunit protein uS7 of Clostridium perfringens (strain ATCC 13124 / DSM 756 / JCM 1290 / NCIMB 6125 / NCTC 8237 / Type A).